Here is a 423-residue protein sequence, read N- to C-terminus: Adenylosuccinate synthetase (423 aa).

Residues 11–17 (GDEGKGK) and 39–41 (GHT) each bind GTP. Catalysis depends on aspartate 12, which acts as the Proton acceptor. The Mg(2+) site is built by aspartate 12 and glycine 39. IMP contacts are provided by residues 12 to 15 (DEGK), 37 to 40 (NAGH), threonine 127, arginine 141, glutamine 223, threonine 238, and arginine 302. Histidine 40 functions as the Proton donor in the catalytic mechanism. 298–304 (TTTGRSR) contacts substrate. Residues arginine 304, 330-332 (KLD), and 412-414 (SVG) each bind GTP.

Belongs to the adenylosuccinate synthetase family. As to quaternary structure, homodimer. It depends on Mg(2+) as a cofactor.

The protein resides in the cytoplasm. The enzyme catalyses IMP + L-aspartate + GTP = N(6)-(1,2-dicarboxyethyl)-AMP + GDP + phosphate + 2 H(+). The protein operates within purine metabolism; AMP biosynthesis via de novo pathway; AMP from IMP: step 1/2. Plays an important role in the de novo pathway of purine nucleotide biosynthesis. Catalyzes the first committed step in the biosynthesis of AMP from IMP. This chain is Adenylosuccinate synthetase, found in Methanococcoides burtonii (strain DSM 6242 / NBRC 107633 / OCM 468 / ACE-M).